The sequence spans 144 residues: Large ribosomal subunit protein uL15 (144 aa).

The disordered stretch occupies residues 1-54 (MRLNTIKPGEGSKKTAKRVGRGIGSGLGKTCGRGHKGQKSRSGGFHKVGFEGGQ). Positions 21 to 31 (RGIGSGLGKTC) are enriched in gly residues.

The protein belongs to the universal ribosomal protein uL15 family. Part of the 50S ribosomal subunit.

Its function is as follows. Binds to the 23S rRNA. This is Large ribosomal subunit protein uL15 from Dechloromonas aromatica (strain RCB).